The following is a 252-amino-acid chain: 3-deoxy-manno-octulosonate cytidylyltransferase (252 aa).

This sequence belongs to the KdsB family.

The protein localises to the cytoplasm. The catalysed reaction is 3-deoxy-alpha-D-manno-oct-2-ulosonate + CTP = CMP-3-deoxy-beta-D-manno-octulosonate + diphosphate. The protein operates within nucleotide-sugar biosynthesis; CMP-3-deoxy-D-manno-octulosonate biosynthesis; CMP-3-deoxy-D-manno-octulosonate from 3-deoxy-D-manno-octulosonate and CTP: step 1/1. It participates in bacterial outer membrane biogenesis; lipopolysaccharide biosynthesis. Activates KDO (a required 8-carbon sugar) for incorporation into bacterial lipopolysaccharide in Gram-negative bacteria. This is 3-deoxy-manno-octulosonate cytidylyltransferase from Vibrio cholerae serotype O1 (strain ATCC 39315 / El Tor Inaba N16961).